We begin with the raw amino-acid sequence, 352 residues long: S-adenosylmethionine:tRNA ribosyltransferase-isomerase (352 aa).

This sequence belongs to the QueA family. In terms of assembly, monomer.

It is found in the cytoplasm. The enzyme catalyses 7-aminomethyl-7-carbaguanosine(34) in tRNA + S-adenosyl-L-methionine = epoxyqueuosine(34) in tRNA + adenine + L-methionine + 2 H(+). It functions in the pathway tRNA modification; tRNA-queuosine biosynthesis. Functionally, transfers and isomerizes the ribose moiety from AdoMet to the 7-aminomethyl group of 7-deazaguanine (preQ1-tRNA) to give epoxyqueuosine (oQ-tRNA). The sequence is that of S-adenosylmethionine:tRNA ribosyltransferase-isomerase from Syntrophomonas wolfei subsp. wolfei (strain DSM 2245B / Goettingen).